Consider the following 95-residue polypeptide: Small ribosomal subunit protein uS17 (95 aa).

The protein belongs to the universal ribosomal protein uS17 family. In terms of assembly, part of the 30S ribosomal subunit.

One of the primary rRNA binding proteins, it binds specifically to the 5'-end of 16S ribosomal RNA. The sequence is that of Small ribosomal subunit protein uS17 from Phytoplasma australiense.